We begin with the raw amino-acid sequence, 113 residues long: Photosystem II reaction center Psb28 protein (113 aa).

This sequence belongs to the Psb28 family. Part of the photosystem II complex.

The protein resides in the cellular thylakoid membrane. This is Photosystem II reaction center Psb28 protein from Nostoc punctiforme (strain ATCC 29133 / PCC 73102).